A 377-amino-acid polypeptide reads, in one-letter code: CaM kinase-like vesicle-associated protein (377 aa).

The Protein kinase domain occupies Tyr24–Ile287. The disordered stretch occupies residues Met324 to Gly377. A compositionally biased stretch (low complexity) spans Thr347–Ala362. Residues Leu368–Gly377 are compositionally biased toward pro residues.

This sequence belongs to the protein kinase superfamily. CAMK Ser/Thr protein kinase family. Interacts with calmodulin, in the presence of calcium. Ca(2+) serves as cofactor.

Its subcellular location is the cytoplasmic vesicle membrane. Does not appear to have detectable kinase activity. In Xenopus laevis (African clawed frog), this protein is CaM kinase-like vesicle-associated protein (camkv).